A 263-amino-acid chain; its full sequence is 1-(5-phosphoribosyl)-5-[(5-phosphoribosylamino)methylideneamino] imidazole-4-carboxamide isomerase (263 aa).

The protein belongs to the HisA/HisF family.

It localises to the cytoplasm. It catalyses the reaction 1-(5-phospho-beta-D-ribosyl)-5-[(5-phospho-beta-D-ribosylamino)methylideneamino]imidazole-4-carboxamide = 5-[(5-phospho-1-deoxy-D-ribulos-1-ylimino)methylamino]-1-(5-phospho-beta-D-ribosyl)imidazole-4-carboxamide. It functions in the pathway amino-acid biosynthesis; L-histidine biosynthesis; L-histidine from 5-phospho-alpha-D-ribose 1-diphosphate: step 4/9. The protein is 1-(5-phosphoribosyl)-5-[(5-phosphoribosylamino)methylideneamino] imidazole-4-carboxamide isomerase (HIS6) of Eremothecium gossypii (strain ATCC 10895 / CBS 109.51 / FGSC 9923 / NRRL Y-1056) (Yeast).